The following is a 52-amino-acid chain: Large ribosomal subunit protein eL39 (52 aa).

This sequence belongs to the eukaryotic ribosomal protein eL39 family.

This Tetrahymena thermophila (strain SB210) protein is Large ribosomal subunit protein eL39 (RPL39).